Consider the following 245-residue polypeptide: Bis(5'-nucleosyl)-tetraphosphatase PrpE [asymmetrical] (245 aa).

Belongs to the PrpE family. Requires Ni(2+) as cofactor.

The catalysed reaction is P(1),P(4)-bis(5'-guanosyl) tetraphosphate + H2O = GMP + GTP + 2 H(+). Functionally, asymmetrically hydrolyzes Ap4p to yield AMP and ATP. The protein is Bis(5'-nucleosyl)-tetraphosphatase PrpE [asymmetrical] of Anoxybacillus flavithermus (strain DSM 21510 / WK1).